A 279-amino-acid polypeptide reads, in one-letter code: Tryptophan synthase alpha chain (279 aa).

Residues Glu-50 and Asp-61 each act as proton acceptor in the active site.

This sequence belongs to the TrpA family. As to quaternary structure, tetramer of two alpha and two beta chains.

It carries out the reaction (1S,2R)-1-C-(indol-3-yl)glycerol 3-phosphate + L-serine = D-glyceraldehyde 3-phosphate + L-tryptophan + H2O. The protein operates within amino-acid biosynthesis; L-tryptophan biosynthesis; L-tryptophan from chorismate: step 5/5. Functionally, the alpha subunit is responsible for the aldol cleavage of indoleglycerol phosphate to indole and glyceraldehyde 3-phosphate. The sequence is that of Tryptophan synthase alpha chain from Brucella melitensis biotype 2 (strain ATCC 23457).